Here is a 337-residue protein sequence, read N- to C-terminus: Cysteinyl leukotriene receptor 1 (337 aa).

Residues 1 to 28 lie on the Extracellular side of the membrane; it reads MDETGNLTVSSATCHDTIDDFRNQVYST. Asn6 carries N-linked (GlcNAc...) asparagine glycosylation. A helical transmembrane segment spans residues 29 to 49; that stretch reads LYSMISVVGFFGNGFVLYVLI. Over 50-57 the chain is Cytoplasmic; it reads KTYHKKSA. A helical membrane pass occupies residues 58-78; that stretch reads FQVYMINLAVADLLCVCTLPL. At 79 to 106 the chain is on the extracellular side; the sequence is RVVYYVHKGIWLFGDFLCRLSTYALYVN. Cys96 and Cys173 are disulfide-bonded. The chain crosses the membrane as a helical span at residues 107–127; that stretch reads LYCSIFFMTAMSFFRCIAIVF. At 128-141 the chain is on the cytoplasmic side; the sequence is PVQNINLVTQKKAR. Residues 142-162 form a helical membrane-spanning segment; that stretch reads FVCVGIWIFVILTSSPFLMAK. Over 163 to 193 the chain is Extracellular; the sequence is PQKDEKNNTKCFEPPQDNQTKNHVLVLHYVS. 2 N-linked (GlcNAc...) asparagine glycosylation sites follow: Asn169 and Asn180. Residues 194–214 traverse the membrane as a helical segment; it reads LFVGFIIPFVIIIVCYTMIIL. The Cytoplasmic segment spans residues 215 to 230; the sequence is TLLKKSMKKNLSSHKK. The chain crosses the membrane as a helical span at residues 231–251; the sequence is AIGMIMVVTAAFLVSFMPYHI. Residues 252 to 276 lie on the Extracellular side of the membrane; it reads QRTIHLHFLHNETKPCDSVLRMQKS. Asn262 carries an N-linked (GlcNAc...) asparagine glycan. A helical membrane pass occupies residues 277 to 297; it reads VVITLSLAASNCCFDPLLYFF. The Cytoplasmic portion of the chain corresponds to 298–337; it reads SGGNFRKRLSTFRKHSLSSVTYVPRKKASLPEKGEEICKV.

Belongs to the G-protein coupled receptor 1 family. Widely expressed, with highest levels in spleen and peripheral blood leukocytes. Lower expression in several tissues, such as lung (mostly in smooth muscle bundles and alveolar macrophages), placenta, small intestine, pancreas, colon and heart.

The protein resides in the cell membrane. Functionally, receptor for cysteinyl leukotrienes mediating bronchoconstriction of individuals with and without asthma. Stimulation by LTD4 results in the contraction and proliferation of smooth muscle, edema, eosinophil migration and damage to the mucus layer in the lung. This response is mediated via a G-protein that activates a phosphatidylinositol-calcium second messenger system. The rank order of affinities for the leukotrienes is LTD4 &gt;&gt; LTE4 = LTC4 &gt;&gt; LTB4. This chain is Cysteinyl leukotriene receptor 1 (CYSLTR1), found in Homo sapiens (Human).